The primary structure comprises 306 residues: UDP-N-acetylenolpyruvoylglucosamine reductase (306 aa).

In terms of domain architecture, FAD-binding PCMH-type spans 28–193; sequence KVGGPADFLA…VSAKFSLKPG (166 aa). The active site involves Arg172. The active-site Proton donor is the Ser222. Residue Glu292 is part of the active site.

This sequence belongs to the MurB family. FAD serves as cofactor.

Its subcellular location is the cytoplasm. It carries out the reaction UDP-N-acetyl-alpha-D-muramate + NADP(+) = UDP-N-acetyl-3-O-(1-carboxyvinyl)-alpha-D-glucosamine + NADPH + H(+). Its pathway is cell wall biogenesis; peptidoglycan biosynthesis. Functionally, cell wall formation. The polypeptide is UDP-N-acetylenolpyruvoylglucosamine reductase (Streptococcus mutans serotype c (strain ATCC 700610 / UA159)).